The primary structure comprises 634 residues: 1-deoxy-D-xylulose-5-phosphate synthase (634 aa).

Residues histidine 74 and 115–117 (AHS) each bind thiamine diphosphate. Aspartate 146 is a binding site for Mg(2+). Residues 147 to 148 (GA), asparagine 176, tyrosine 283, and glutamate 365 each bind thiamine diphosphate. Mg(2+) is bound at residue asparagine 176.

It belongs to the transketolase family. DXPS subfamily. Homodimer. It depends on Mg(2+) as a cofactor. Requires thiamine diphosphate as cofactor.

It catalyses the reaction D-glyceraldehyde 3-phosphate + pyruvate + H(+) = 1-deoxy-D-xylulose 5-phosphate + CO2. It functions in the pathway metabolic intermediate biosynthesis; 1-deoxy-D-xylulose 5-phosphate biosynthesis; 1-deoxy-D-xylulose 5-phosphate from D-glyceraldehyde 3-phosphate and pyruvate: step 1/1. Catalyzes the acyloin condensation reaction between C atoms 2 and 3 of pyruvate and glyceraldehyde 3-phosphate to yield 1-deoxy-D-xylulose-5-phosphate (DXP). This is 1-deoxy-D-xylulose-5-phosphate synthase from Burkholderia cenocepacia (strain ATCC BAA-245 / DSM 16553 / LMG 16656 / NCTC 13227 / J2315 / CF5610) (Burkholderia cepacia (strain J2315)).